A 211-amino-acid polypeptide reads, in one-letter code: Glutathione S-transferase (211 aa).

The 85-residue stretch at 3–87 (DNIVLYYFDA…YLSKKYNICG (85 aa)) folds into the GST N-terminal domain. Glutathione-binding positions include 58–59 (QV), 71–72 (QS), Asp-105, Lys-117, and Thr-121. Positions 89-211 (SELNEFYADM…YITNRKESVY (123 aa)) constitute a GST C-terminal domain.

It belongs to the GST superfamily. Homodimer. In the absence of ligands two homodimers may interact to form a tetramer.

It catalyses the reaction RX + glutathione = an S-substituted glutathione + a halide anion + H(+). With respect to regulation, inhibited by chloroquine, cibacron blue, ferriprotoporphyrin IX (hemin) and S-hexylglutathione. Functionally, conjugation of reduced glutathione to a wide number of exogenous and endogenous hydrophobic electrophiles. May also function as a storage protein or ligandin for parasitotoxic ferriprotoporphyrin IX (hemin). The sequence is that of Glutathione S-transferase from Plasmodium falciparum (isolate 3D7).